A 113-amino-acid polypeptide reads, in one-letter code: Flagellar hook-basal body complex protein FliE (113 aa).

It belongs to the FliE family.

It localises to the bacterial flagellum basal body. The chain is Flagellar hook-basal body complex protein FliE from Rhizobium leguminosarum bv. trifolii (strain WSM2304).